Consider the following 323-residue polypeptide: MLATLSQIRAWSTEHLIDAAGYWTETADRWEDVFLQMRNQAHAIAWNGAGGDGLRQRTRADFSTVSGIADQLRRAATIARNGAGTIDAAQRRVMYAVEDAQDAGFNVGEDLSVTDTKTTQPAAVQAARLAQAQALAGDIRLRVGQLVAAENEVSGQLAATTGDVGNVRFAGAPVVAHSAVQLVDFFKQDGPTPPPPGAPHPSGGADGPYSDPITSMMLPPAGTEAPVSDATKRWVDNMVNELAARPPDDPIAVEARRLAFQALHRPCNSAEWTAAVAGFAGSSAGVVGTALAIPAGPADWALLGAALLGVGGSGAAVVNCATK.

An N-terminal signal peptide occupies residues 1–45 (MLATLSQIRAWSTEHLIDAAGYWTETADRWEDVFLQMRNQAHAIA). Residues 186 to 227 (FKQDGPTPPPPGAPHPSGGADGPYSDPITSMMLPPAGTEAPV) form a disordered region. Transmembrane regions (helical) follow at residues 269–289 (SAEW…VVGT) and 290–310 (ALAI…LLGV).

It is found in the cell membrane. This is an uncharacterized protein from Mycobacterium tuberculosis (strain CDC 1551 / Oshkosh).